The chain runs to 52 residues: Lantibiotic gallidermin (52 aa).

A propeptide spanning residues 1 to 30 is cleaved from the precursor; it reads MEAVKEKNELFDLDVKVNAKESNDSGAEPR. The segment at residues 33-37 is a cross-link (lanthionine (Ser-Cys)); it reads SKFLC. The beta-methyllanthionine (Thr-Cys) cross-link spans 38–41; it reads TPGC. Thr-44 is subject to (Z)-2,3-didehydrobutyrine. Residues 46 to 51 constitute a cross-link (lanthionine (Ser-Cys)); it reads SFNSYC. The S-(2-aminovinyl)-D-cysteine (Ser-Cys) cross-link spans 49–52; the sequence is SYCC.

This sequence belongs to the type A lantibiotic family. Maturation of lantibiotics involves the enzymatic conversion of Thr, and Ser into dehydrated AA and the formation of thioether bonds with cysteine. The C-terminal lanthionine undergoes decarboxylation. This is followed by membrane translocation and cleavage of the modified precursor. Post-translationally, the structure of the 2,3-didehydrobutyrine is not discussed in PubMed:1932575. However, in Fig. 5 the NMR model appears to have the Z-isomer.

Functionally, lanthionine-containing peptide antibiotic (lantibiotic) active on Gram-positive bacteria. The bactericidal activity of lantibiotics is based on depolarization of energized bacterial cytoplasmic membranes, initiated by the formation of aqueous transmembrane pores. This Staphylococcus gallinarum protein is Lantibiotic gallidermin (gdmA).